The primary structure comprises 264 residues: Phosphonoacetaldehyde hydrolase (264 aa).

Residue Asp-9 is the Nucleophile of the active site. Mg(2+) contacts are provided by Asp-9 and Ala-11. The Schiff-base intermediate with substrate role is filled by Lys-50. Mg(2+) is bound at residue Asp-183.

This sequence belongs to the HAD-like hydrolase superfamily. PhnX family. Homodimer. Mg(2+) serves as cofactor.

The catalysed reaction is phosphonoacetaldehyde + H2O = acetaldehyde + phosphate + H(+). Functionally, involved in phosphonate degradation. The protein is Phosphonoacetaldehyde hydrolase of Bacillus cereus (strain ATCC 14579 / DSM 31 / CCUG 7414 / JCM 2152 / NBRC 15305 / NCIMB 9373 / NCTC 2599 / NRRL B-3711).